The primary structure comprises 327 residues: Dolichyl-phosphate beta-glucosyltransferase (327 aa).

Over 1–15 the chain is Lumenal; that stretch reads MIDLFINIASFTIYG. Residues 16-36 form a helical membrane-spanning segment; the sequence is IPVIPLFIIVFVILSYYLLLL. The Cytoplasmic portion of the chain corresponds to 37-327; that stretch reads HDESPLWLEK…YLLGIWKIKS (291 aa).

This sequence belongs to the glycosyltransferase 2 family.

The protein localises to the endoplasmic reticulum membrane. The catalysed reaction is a di-trans,poly-cis-dolichyl phosphate + UDP-alpha-D-glucose = a di-trans,poly-cis-dolichyl beta-D-glucosyl phosphate + UDP. Its pathway is protein modification; protein glycosylation. Its function is as follows. Endoplasmic reticulum membrane-bound UDP-glucose:dolichyl-phosphate glucosyltransferase involved in protein N-linked glycosylation. The chain is Dolichyl-phosphate beta-glucosyltransferase (alg5) from Dictyostelium discoideum (Social amoeba).